The following is a 549-amino-acid chain: MSTFGYRRGLSKYESIDEDELLASLTAEELKELERELEDIEPDRNLPVGLRQKSLTEKTPTGNFSREALMAYWEKESQKLLEKERLGECGKLAEEDKEESEEELIFTESNSEVSEEVCTEEEEESTEEEEEEEEEDSEEEEVTTEVTKHINGTVSHNGVNPDNSKPKTFKSQIENINLTNGNSGGTQRNTESPAAIHPCGNPTVIEDALEKIKNNDPDTTEVNLNNIENITTQTLSRFAEALKENTVVKTFSLANTHADDAAAIAIAEMLKVNEHITSVNVESNFITGKGILAIMRALQHNTVLTELRFHNQRHIMGSQVEMEIVKLLKENTTLLRLGYHFELPGPRMSMTSILTRNMDKQRQKRMQEQKQQEGHDGGATLRTKVWQRGTPGSSPYASPRQSPWSSPKVSKKVHTGRSRPPSPVAPPPPPPPPPLPPHMLPPPPPPPAPPLPGKKLITRNIAEVIKQQESAQRALQNGQRKKKGKKVKKQPNNILKEIKNSLRSVQEKKMEESSRPSTPQRSAHENLMEAIRGSSIRQLRRVEVPEALR.

Residues 1 to 42 (MSTFGYRRGLSKYESIDEDELLASLTAEELKELERELEDIEP) are tropomyosin-binding. An interaction with tropomyosin alpha region spans residues 1 to 47 (MSTFGYRRGLSKYESIDEDELLASLTAEELKELERELEDIEPDRNLP). Interaction with actin regions lie at residues 1–164 (MSTF…PDNS), 165–499 (KPKT…KEIK), and 523–542 (AHENLMEAIRGSSIRQLRRV). Phosphoserine is present on residues Ser11, Ser15, and Ser24. Disordered regions lie at residues 91 to 166 (KLAE…NSKP), 179 to 200 (TNGNSGGTQRNTESPAAIHPCG), 358 to 455 (MDKQ…PGKK), and 469 to 534 (ESAQ…IRGS). Composition is skewed to acidic residues over residues 95-105 (EDKEESEEELI) and 113-143 (VSEEVCTEEEEESTEEEEEEEEEDSEEEEVT). 2 stretches are compositionally biased toward polar residues: residues 150–163 (INGTVSHNGVNPDN) and 179–192 (TNGNSGGTQRNTES). A compositionally biased stretch (basic and acidic residues) spans 358–376 (MDKQRQKRMQEQKQQEGHD). Polar residues predominate over residues 390-401 (TPGSSPYASPRQ). Ser406 carries the phosphoserine modification. Residues 420–452 (PPSPVAPPPPPPPPPLPPHMLPPPPPPPAPPLP) are compositionally biased toward pro residues. Residues 457-515 (ITRNIAEVIKQQESAQRALQNGQRKKKGKKVKKQPNNILKEIKNSLRSVQEKKMEESSR) are a coiled coil. Residues 469-478 (ESAQRALQNG) are compositionally biased toward polar residues. Over residues 479–489 (QRKKKGKKVKK) the composition is skewed to basic residues. Positions 496–514 (KEIKNSLRSVQEKKMEESS) are enriched in basic and acidic residues. Residues 523–542 (AHENLMEAIRGSSIRQLRRV) enclose the WH2 domain.

Belongs to the tropomodulin family. As to quaternary structure, can bind at least three actin monomers and thereby provides a nucleus for actin filament formation. Interacts (via N-terminus) with tropomyosin alpha (TPM1) (via N-terminus). May also interact with TPM2 (via N-terminus). Interacts with FLII.

The protein resides in the cytoplasm. It is found in the myofibril. It localises to the sarcomere. Its subcellular location is the m line. The protein localises to the cytoskeleton. In terms of biological role, mediates nucleation of actin filaments and thereby promotes actin polymerization. Plays a role in the regulation of actin filament length. Required for normal sarcomere organization in the heart, and for normal heart function. This Rattus norvegicus (Rat) protein is Leiomodin-2 (Lmod2).